Reading from the N-terminus, the 364-residue chain is Dihydroorotate dehydrogenase (quinone) (364 aa).

Residues 61–65 (AGFDK) and T85 contribute to the FMN site. K65 serves as a coordination point for substrate. A substrate-binding site is contributed by 110–114 (NRMGF). N139 and N170 together coordinate FMN. N170 lines the substrate pocket. The active-site Nucleophile is S173. Position 175 (N175) interacts with substrate. FMN contacts are provided by K214 and A242. 243-244 (NT) serves as a coordination point for substrate. Residues G266, G295, and 316–317 (YS) each bind FMN.

Belongs to the dihydroorotate dehydrogenase family. Type 2 subfamily. As to quaternary structure, monomer. Requires FMN as cofactor.

The protein localises to the cell membrane. The enzyme catalyses (S)-dihydroorotate + a quinone = orotate + a quinol. The protein operates within pyrimidine metabolism; UMP biosynthesis via de novo pathway; orotate from (S)-dihydroorotate (quinone route): step 1/1. Its function is as follows. Catalyzes the conversion of dihydroorotate to orotate with quinone as electron acceptor. The chain is Dihydroorotate dehydrogenase (quinone) from Rhodopseudomonas palustris (strain HaA2).